The chain runs to 446 residues: Packaging protein 1 (446 aa).

A disordered region spans residues 1-71; that stretch reads MEEKAGLGRL…QPQASKPKKH (71 aa). Positions 31 to 43 are enriched in basic and acidic residues; sequence FHSDRNHPNKEAE. 170–177 is an ATP binding site; it reads GPTGCGKS. The segment at 439–446 is DNA-binding; sequence RYYHSKKK.

Belongs to the adenoviridae packaging protein 1 family. As to quaternary structure, homodimer. Part of a genome packaging complex composed of packaging proteins 1, 2 and 3; this complex specifically binds to the packaging sequence on the left end of viral genomic DNA and performs packaging of the viral genome. Interacts with protein 33K.

Its subcellular location is the virion. It is found in the host nucleus. The protein resides in the host nucleoplasm. The protein localises to the host nucleolus. Functionally, component of the packaging machinery which encapsidates the viral DNA into preformed capsids and transcriptional activator of the viral major late promoter (MLP). Binds, along with packaging proteins 2 and 3, to the specific packaging sequence on the left end of viral genomic DNA and displays ATPase activity thereby providing the power stroke of the packaging machinery. The activity of packaging protein IVa2 is stimulated by protein 33K which acts as a terminase. May be the protein that pumps DNA into the capsid powered by ATP hydrolysis. Specifically binds to the 5'-CG-3' nucleotides of the repeats making up the packaging sequence. Component of the DEF-A and DEF-B transcription factors that bind downstream elements of the major late promoter (MLP), and stimulate transcription from the MLP after initiation of viral DNA replication. DEF-A is a heterodimer packaging proteins 1 and 2 and DEF-B is a homodimer of packaging protein 1. The polypeptide is Packaging protein 1 (Canine adenovirus serotype 2 (strain Toronto A 26-61) (CAdV-2)).